Reading from the N-terminus, the 137-residue chain is Small ribosomal subunit protein uS9 (137 aa).

Residues 114 to 137 (DSRMKERKKPGLRGARRGVQFSKR) are disordered. Basic residues predominate over residues 118–137 (KERKKPGLRGARRGVQFSKR).

The protein belongs to the universal ribosomal protein uS9 family.

This is Small ribosomal subunit protein uS9 from Rhodopirellula baltica (strain DSM 10527 / NCIMB 13988 / SH1).